Reading from the N-terminus, the 222-residue chain is Superoxide dismutase [Mn], mitochondrial (222 aa).

The N-terminal 24 residues, 1 to 24 (MLCRAACSTSRKLVPALGSLGSRQ), are a transit peptide targeting the mitochondrion. Mn(2+) is bound at residue histidine 50. Residue tyrosine 58 is modified to 3'-nitrotyrosine. N6-acetyllysine; alternate occurs at positions 68 and 75. N6-succinyllysine; alternate occurs at positions 68 and 75. Histidine 98 serves as a coordination point for Mn(2+). Lysine 114 is modified (N6-acetyllysine). 2 positions are modified to N6-acetyllysine; alternate: lysine 122 and lysine 130. Lysine 122 and lysine 130 each carry N6-succinyllysine; alternate. 2 residues coordinate Mn(2+): aspartate 183 and histidine 187. Lysine 202 carries the N6-acetyllysine modification.

Belongs to the iron/manganese superoxide dismutase family. As to quaternary structure, homotetramer. The cofactor is Mn(2+). Post-translationally, nitrated under oxidative stress. Nitration coupled with oxidation inhibits the catalytic activity. Acetylation at Lys-122 decreases enzymatic activity. Deacetylated by SIRT3 upon exposure to ionizing radiations or after long fasting. In terms of processing, polyubiquitinated; leading to proteasomal degradation. Deubiquitinated by USP36 which increases protein stability.

It is found in the mitochondrion matrix. It carries out the reaction 2 superoxide + 2 H(+) = H2O2 + O2. Destroys superoxide anion radicals which are normally produced within the cells and which are toxic to biological systems. The polypeptide is Superoxide dismutase [Mn], mitochondrial (SOD2) (Equus caballus (Horse)).